The chain runs to 335 residues: Tetraacyldisaccharide 4'-kinase (335 aa).

An ATP-binding site is contributed by 59–66 (TAGGNGKT).

Belongs to the LpxK family.

It catalyses the reaction a lipid A disaccharide + ATP = a lipid IVA + ADP + H(+). Its pathway is glycolipid biosynthesis; lipid IV(A) biosynthesis; lipid IV(A) from (3R)-3-hydroxytetradecanoyl-[acyl-carrier-protein] and UDP-N-acetyl-alpha-D-glucosamine: step 6/6. Functionally, transfers the gamma-phosphate of ATP to the 4'-position of a tetraacyldisaccharide 1-phosphate intermediate (termed DS-1-P) to form tetraacyldisaccharide 1,4'-bis-phosphate (lipid IVA). This Vibrio campbellii (strain ATCC BAA-1116) protein is Tetraacyldisaccharide 4'-kinase.